Here is a 601-residue protein sequence, read N- to C-terminus: ATP-dependent lipid A-core flippase (601 aa).

The next 5 helical transmembrane spans lie at Cys33–Ile53, Val72–Tyr92, Val158–Val178, Leu255–Val275, and Thr283–Ile303. The 282-residue stretch at Val34–Arg315 folds into the ABC transmembrane type-1 domain. In terms of domain architecture, ABC transporter spans Ile347–Met583. Gly381–Thr388 provides a ligand contact to ATP.

Belongs to the ABC transporter superfamily. Lipid exporter (TC 3.A.1.106) family. Homodimer.

The protein localises to the cell inner membrane. The enzyme catalyses ATP + H2O + lipid A-core oligosaccharideSide 1 = ADP + phosphate + lipid A-core oligosaccharideSide 2.. Involved in lipopolysaccharide (LPS) biosynthesis. Translocates lipid A-core from the inner to the outer leaflet of the inner membrane. Transmembrane domains (TMD) form a pore in the inner membrane and the ATP-binding domain (NBD) is responsible for energy generation. The polypeptide is ATP-dependent lipid A-core flippase (Methylococcus capsulatus (strain ATCC 33009 / NCIMB 11132 / Bath)).